Reading from the N-terminus, the 461-residue chain is Protein KlcB (461 aa).

Disordered stretches follow at residues 84 to 107 (PEAT…TEDK) and 349 to 379 (RAKA…EDAP). Residues 91–101 (ARRRTKARKSK) show a composition bias toward basic residues. Basic and acidic residues predominate over residues 357-377 (GQRREPVTPAKPEPEPAKDED).

The chain is Protein KlcB (klcB) from Escherichia coli.